The primary structure comprises 358 residues: Mitogen-activated protein kinase 1 (358 aa).

The residue at position 2 (Ala-2) is an N-acetylalanine. Residues 23 to 311 (YTNLSYIGEG…VEQALAHPYL (289 aa)) enclose the Protein kinase domain. Ser-27 bears the Phosphoserine; by SGK1 mark. ATP-binding positions include 29 to 37 (IGEGAYGMV) and Lys-52. Residue Asp-147 is the Proton acceptor of the active site. Thr-183 is modified (phosphothreonine; by MAP2K1 and MAP2K2). Positions 183–185 (TEY) match the TXY motif. Tyr-185 carries the post-translational modification Phosphotyrosine; by MAP2K1 and MAP2K2. Phosphothreonine; by autocatalysis is present on Thr-188. Residues Ser-244, Ser-246, and Ser-282 each carry the phosphoserine modification.

This sequence belongs to the protein kinase superfamily. CMGC Ser/Thr protein kinase family. MAP kinase subfamily. In terms of assembly, binds both upstream activators and downstream substrates in multimolecular complexes. This interaction inhibits its tyrosine-kinase activity. Interacts with ADAM15, ARHGEF2, ARRB2, DAPK1 (via death domain), HSF4, IER3, IPO7, NISCH, SGK1, and isoform 1 of NEK2. Interacts (via phosphorylated form) with TPR (via C-terminal region and phosphorylated form); the interaction requires dimerization of MAPK1/ERK2 and increases following EGF stimulation. Interacts with MAP2K1. Interacts with DUSP6. Interacts (phosphorylated form) with CAV2 ('Tyr-19'-phosphorylated form); the interaction, promoted by insulin, leads to nuclear location and MAPK1 activation. Interacts with DCC. Interacts with MORG1. Interacts with PEA15. Interacts with MKNK2. MKNK2 isoform 1 binding prevents from dephosphorylation and inactivation. The phosphorylated form interacts with PML. Interacts with STYX. Interacts with CDK2AP2. Interacts with CAVIN4. Interacts with DUSP7; the interaction enhances DUSP7 phosphatase activity. Interacts with GIT1; this interaction is necessary for MAPK1 localization to focal adhesions. Interacts with ZNF263. Interacts with phosphoglycerate kinase PGK1; the interaction is direct, occurs under hypoxic conditions, and promotes interaction between PGK1 and PIN1. Mg(2+) is required as a cofactor. Post-translationally, dually phosphorylated on Thr-183 and Tyr-185, which activates the enzyme. Ligand-activated ALK induces tyrosine phosphorylation. Dephosphorylated by PTPRJ at Tyr-185. Phosphorylated upon FLT3 and KIT signaling. Dephosphorylated by DUSP1 and DUSP2 at Thr-183 and Tyr-185. In terms of processing, ISGylated. Ubiquitinated by TRIM15 via 'Lys-63'-linked ubiquitination; leading to activation. Deubiquitinated by CYLD. As to expression, widely expressed.

The protein resides in the cytoplasm. Its subcellular location is the cytoskeleton. It is found in the spindle. The protein localises to the nucleus. It localises to the microtubule organizing center. The protein resides in the centrosome. Its subcellular location is the membrane. It is found in the caveola. The protein localises to the cell junction. It localises to the focal adhesion. The catalysed reaction is L-seryl-[protein] + ATP = O-phospho-L-seryl-[protein] + ADP + H(+). It catalyses the reaction L-threonyl-[protein] + ATP = O-phospho-L-threonyl-[protein] + ADP + H(+). With respect to regulation, phosphorylated by MAP2K1/MEK1 and MAP2K2/MEK2 on Thr-183 and Tyr-185 in response to external stimuli like insulin or NGF. Both phosphorylations are required for activity. This phosphorylation causes dramatic conformational changes, which enable full activation and interaction of MAPK1/ERK2 with its substrates. Phosphorylation on Ser-27 by SGK1 results in its activation by enhancing its interaction with MAP2K1/MEK1 and MAP2K2/MEK2. Dephosphorylated and inactivated by DUSP1, DUSP3, DUSP6 and DUSP9. Inactivated by pyrimidylpyrrole inhibitors. Its function is as follows. Serine/threonine kinase which acts as an essential component of the MAP kinase signal transduction pathway. MAPK1/ERK2 and MAPK3/ERK1 are the 2 MAPKs which play an important role in the MAPK/ERK cascade. They participate also in a signaling cascade initiated by activated KIT and KITLG/SCF. Depending on the cellular context, the MAPK/ERK cascade mediates diverse biological functions such as cell growth, adhesion, survival and differentiation through the regulation of transcription, translation, cytoskeletal rearrangements. The MAPK/ERK cascade also plays a role in initiation and regulation of meiosis, mitosis, and postmitotic functions in differentiated cells by phosphorylating a number of transcription factors. About 160 substrates have already been discovered for ERKs. Many of these substrates are localized in the nucleus, and seem to participate in the regulation of transcription upon stimulation. However, other substrates are found in the cytosol as well as in other cellular organelles, and those are responsible for processes such as translation, mitosis and apoptosis. Moreover, the MAPK/ERK cascade is also involved in the regulation of the endosomal dynamics, including lysosome processing and endosome cycling through the perinuclear recycling compartment (PNRC); as well as in the fragmentation of the Golgi apparatus during mitosis. The substrates include transcription factors (such as ATF2, BCL6, ELK1, ERF, FOS, HSF4 or SPZ1), cytoskeletal elements (such as CANX, CTTN, GJA1, MAP2, MAPT, PXN, SORBS3 or STMN1), regulators of apoptosis (such as BAD, BTG2, CASP9, DAPK1, IER3, MCL1 or PPARG), regulators of translation (such as EIF4EBP1 and FXR1) and a variety of other signaling-related molecules (like ARHGEF2, DCC, FRS2 or GRB10). Protein kinases (such as RAF1, RPS6KA1/RSK1, RPS6KA3/RSK2, RPS6KA2/RSK3, RPS6KA6/RSK4, SYK, MKNK1/MNK1, MKNK2/MNK2, RPS6KA5/MSK1, RPS6KA4/MSK2, MAPKAPK3 or MAPKAPK5) and phosphatases (such as DUSP1, DUSP4, DUSP6 or DUSP16) are other substrates which enable the propagation the MAPK/ERK signal to additional cytosolic and nuclear targets, thereby extending the specificity of the cascade. Mediates phosphorylation of TPR in response to EGF stimulation. May play a role in the spindle assembly checkpoint. Phosphorylates PML and promotes its interaction with PIN1, leading to PML degradation. Phosphorylates CDK2AP2. Phosphorylates phosphoglycerate kinase PGK1 under hypoxic conditions to promote its targeting to the mitochondrion and suppress the formation of acetyl-coenzyme A from pyruvate. Functionally, acts as a transcriptional repressor. Binds to a [GC]AAA[GC] consensus sequence. Repress the expression of interferon gamma-induced genes. Seems to bind to the promoter of CCL5, DMP1, IFIH1, IFITM1, IRF7, IRF9, LAMP3, OAS1, OAS2, OAS3 and STAT1. Transcriptional activity is independent of kinase activity. In Mus musculus (Mouse), this protein is Mitogen-activated protein kinase 1.